The following is a 69-amino-acid chain: Sec-independent protein translocase protein TatA (69 aa).

A helical membrane pass occupies residues 1–21 (MFGLGGQELVLILLIILLLFG). The interval 48 to 69 (EELNKAVDDTPEKEKKSSSEKS) is disordered.

Belongs to the TatA/E family. In terms of assembly, forms a complex with TatC.

The protein resides in the cell inner membrane. In terms of biological role, part of the twin-arginine translocation (Tat) system that transports large folded proteins containing a characteristic twin-arginine motif in their signal peptide across membranes. TatA could form the protein-conducting channel of the Tat system. This Chlorobium phaeobacteroides (strain BS1) protein is Sec-independent protein translocase protein TatA.